A 468-amino-acid polypeptide reads, in one-letter code: Ribulose bisphosphate carboxylase large chain (468 aa).

The residue at position 5 (Lys5) is an N6,N6,N6-trimethyllysine. Substrate-binding residues include Asn114 and Thr164. Residue Lys166 is the Proton acceptor of the active site. Substrate is bound at residue Lys168. Positions 192, 194, and 195 each coordinate Mg(2+). Lys192 is modified (N6-carboxylysine). His285 serves as the catalytic Proton acceptor. The substrate site is built by Arg286, His318, and Ser370.

It belongs to the RuBisCO large chain family. Type I subfamily. Heterohexadecamer of 8 large chains and 8 small chains; disulfide-linked. The disulfide link is formed within the large subunit homodimers. Mg(2+) is required as a cofactor. The disulfide bond which can form in the large chain dimeric partners within the hexadecamer appears to be associated with oxidative stress and protein turnover.

Its subcellular location is the plastid. The protein localises to the chloroplast. It carries out the reaction 2 (2R)-3-phosphoglycerate + 2 H(+) = D-ribulose 1,5-bisphosphate + CO2 + H2O. The enzyme catalyses D-ribulose 1,5-bisphosphate + O2 = 2-phosphoglycolate + (2R)-3-phosphoglycerate + 2 H(+). In terms of biological role, ruBisCO catalyzes two reactions: the carboxylation of D-ribulose 1,5-bisphosphate, the primary event in carbon dioxide fixation, as well as the oxidative fragmentation of the pentose substrate in the photorespiration process. Both reactions occur simultaneously and in competition at the same active site. The chain is Ribulose bisphosphate carboxylase large chain from Tecoma stans (Yellow bells).